A 95-amino-acid chain; its full sequence is Small ribosomal subunit protein bS16 (95 aa).

The protein belongs to the bacterial ribosomal protein bS16 family.

This is Small ribosomal subunit protein bS16 from Roseiflexus sp. (strain RS-1).